The sequence spans 335 residues: Lipoyl synthase (335 aa).

A compositionally biased stretch (polar residues) spans 1–13 (MTIDTNPESSTPS). Positions 1-29 (MTIDTNPESSTPSAPAYNPSEKQKGSAKT) are disordered. Cys-75, Cys-80, Cys-86, Cys-101, Cys-105, Cys-108, and Ser-315 together coordinate [4Fe-4S] cluster. In terms of domain architecture, Radical SAM core spans 86 to 304 (CFGKGTATFM…EEEAYKMGFA (219 aa)).

Belongs to the radical SAM superfamily. Lipoyl synthase family. Requires [4Fe-4S] cluster as cofactor.

It localises to the cytoplasm. The enzyme catalyses [[Fe-S] cluster scaffold protein carrying a second [4Fe-4S](2+) cluster] + N(6)-octanoyl-L-lysyl-[protein] + 2 oxidized [2Fe-2S]-[ferredoxin] + 2 S-adenosyl-L-methionine + 4 H(+) = [[Fe-S] cluster scaffold protein] + N(6)-[(R)-dihydrolipoyl]-L-lysyl-[protein] + 4 Fe(3+) + 2 hydrogen sulfide + 2 5'-deoxyadenosine + 2 L-methionine + 2 reduced [2Fe-2S]-[ferredoxin]. It participates in protein modification; protein lipoylation via endogenous pathway; protein N(6)-(lipoyl)lysine from octanoyl-[acyl-carrier-protein]: step 2/2. In terms of biological role, catalyzes the radical-mediated insertion of two sulfur atoms into the C-6 and C-8 positions of the octanoyl moiety bound to the lipoyl domains of lipoate-dependent enzymes, thereby converting the octanoylated domains into lipoylated derivatives. In Herminiimonas arsenicoxydans, this protein is Lipoyl synthase.